The primary structure comprises 303 residues: Ribonuclease Z (303 aa).

Zn(2+) is bound by residues His-61, His-63, Asp-65, His-66, His-139, Asp-207, and His-266. Asp-65 serves as the catalytic Proton acceptor.

The protein belongs to the RNase Z family. As to quaternary structure, homodimer. Zn(2+) is required as a cofactor.

The catalysed reaction is Endonucleolytic cleavage of RNA, removing extra 3' nucleotides from tRNA precursor, generating 3' termini of tRNAs. A 3'-hydroxy group is left at the tRNA terminus and a 5'-phosphoryl group is left at the trailer molecule.. Its function is as follows. Zinc phosphodiesterase, which displays some tRNA 3'-processing endonuclease activity. Probably involved in tRNA maturation, by removing a 3'-trailer from precursor tRNA. The polypeptide is Ribonuclease Z (Clostridium kluyveri (strain ATCC 8527 / DSM 555 / NBRC 12016 / NCIMB 10680 / K1)).